The chain runs to 76 residues: ATP synthase subunit c (76 aa).

The next 2 helical transmembrane spans lie at 13–33 (LNVVGYGLAAIGPGIGLGILI) and 55–75 (FLGLAFVEVLALLGFVAAFIF).

Belongs to the ATPase C chain family. As to quaternary structure, F-type ATPases have 2 components, F(1) - the catalytic core - and F(0) - the membrane proton channel. F(1) has five subunits: alpha(3), beta(3), gamma(1), delta(1), epsilon(1). F(0) has three main subunits: a(1), b(2) and c(10-14). The alpha and beta chains form an alternating ring which encloses part of the gamma chain. F(1) is attached to F(0) by a central stalk formed by the gamma and epsilon chains, while a peripheral stalk is formed by the delta and b chains.

Its subcellular location is the cell membrane. F(1)F(0) ATP synthase produces ATP from ADP in the presence of a proton or sodium gradient. F-type ATPases consist of two structural domains, F(1) containing the extramembraneous catalytic core and F(0) containing the membrane proton channel, linked together by a central stalk and a peripheral stalk. During catalysis, ATP synthesis in the catalytic domain of F(1) is coupled via a rotary mechanism of the central stalk subunits to proton translocation. Its function is as follows. Key component of the F(0) channel; it plays a direct role in translocation across the membrane. A homomeric c-ring of between 10-14 subunits forms the central stalk rotor element with the F(1) delta and epsilon subunits. The chain is ATP synthase subunit c from Bifidobacterium animalis subsp. lactis (strain AD011).